Reading from the N-terminus, the 832-residue chain is Protein translocase subunit SecA (832 aa).

ATP-binding positions include Q87, 105–109, and D512; that span reads GEGKT.

This sequence belongs to the SecA family. In terms of assembly, monomer and homodimer. Part of the essential Sec protein translocation apparatus which comprises SecA, SecYEG and auxiliary proteins SecDF-YajC and YidC.

The protein resides in the cell membrane. It localises to the cytoplasm. It catalyses the reaction ATP + H2O + cellular proteinSide 1 = ADP + phosphate + cellular proteinSide 2.. Its function is as follows. Part of the Sec protein translocase complex. Interacts with the SecYEG preprotein conducting channel. Has a central role in coupling the hydrolysis of ATP to the transfer of proteins into and across the cell membrane, serving as an ATP-driven molecular motor driving the stepwise translocation of polypeptide chains across the membrane. This is Protein translocase subunit SecA from Wigglesworthia glossinidia brevipalpis.